Reading from the N-terminus, the 189-residue chain is Large ribosomal subunit protein bL9 (189 aa).

The protein belongs to the bacterial ribosomal protein bL9 family.

In terms of biological role, binds to the 23S rRNA. The protein is Large ribosomal subunit protein bL9 of Cereibacter sphaeroides (strain ATCC 17025 / ATH 2.4.3) (Rhodobacter sphaeroides).